A 169-amino-acid chain; its full sequence is Heat shock protein beta-7 (169 aa).

The disordered stretch occupies residues 1–37 (MSHRTSSAFRAERSFRSSSSSSSSSSSSASRALPAQD). Residues 1 to 70 (MSHRTSSAFR…PLAFPARPGG (70 aa)) form a required for localization to SC35 splicing speckles region. Residues 16 to 32 (RSSSSSSSSSSSSASRA) are compositionally biased toward low complexity. The sHSP domain occupies 61-169 (PLAFPARPGG…QQTFRTEIKI (109 aa)).

This sequence belongs to the small heat shock protein (HSP20) family. As to quaternary structure, interacts with C-terminal domain of actin-binding protein 280. As to expression, found in both cardiac and slow skeletal (soleus) muscle.

It localises to the cytoplasm. It is found in the nucleus. The protein resides in the cajal body. This Mus musculus (Mouse) protein is Heat shock protein beta-7 (Hspb7).